Reading from the N-terminus, the 287-residue chain is Beta-lactamase GES-1 (287 aa).

Residues 1–18 form the signal peptide; the sequence is MRFIHALLLAGIAHSAYA. Cysteines 63 and 233 form a disulfide. Serine 64 serves as the catalytic Nucleophile; acyl-ester intermediate. Positions 67, 125, 161, and 232 each coordinate a beta-lactam.

It belongs to the class-A beta-lactamase family. In terms of assembly, monomer. May form dimers.

The enzyme catalyses a beta-lactam + H2O = a substituted beta-amino acid. With respect to regulation, inhibited by the beta-lactamase-blocking agents clavulanic acid, tazobactam, sulbactam and tazobactam and the carbapenem, imipenem. Inhibition by imipenem may involve Gly-165. Functionally, extended-spectrum beta-lactamase (ESBL) which confers resistance to penicillins, as well as first, second, third and fourth-generation cephalosporins. Has ceftazidime-hydrolyzing activity. Inactive against the carbapenems, imipenem, meropenem, ertapenem and doripenem. However, weak hydrolytic activity with respect to imipenem has also been reported. This chain is Beta-lactamase GES-1, found in Klebsiella pneumoniae.